A 432-amino-acid polypeptide reads, in one-letter code: MSNVGKPRTAQEIQQDWDTNPRWNGITRDYTADQVADLQGSVIEEHTLARRGSEILWDAVTQEGDGYINALGALTGNQAVQQVRAGLKAVYLSGWQVAGDANLSGHTYPDQSLYPANSVPSVVRRINNALLRSDEIARTEGDTSVDNWVVPIVADGEAGFGGALNVYELQKAMIAAGAAGTHWEDQLASEKKCGHLGGKVLIPTQQHIRTLNSARLAADVANTPTVVIARTDAEAATLITSDVDERDQPFITGERTAEGYYHVKNGLEPCIARAKSYAPYADMIWMETGTPDLELAKKFAEGVRSEFPDQLLSYNCSPSFNWSAHLEADEIAKFQKELGAMGFKFQFITLAGFHSLNYGMFDLAYGYAREGMTSFVDLQNREFKAAEERGFTAVKHQREVGAGYFDQIATTVDPNSSTTALKGSTEEGQFHN.

A disordered region spans residues 1-24; that stretch reads MSNVGKPRTAQEIQQDWDTNPRWN. The span at 11–22 shows a compositional bias: polar residues; it reads QEIQQDWDTNPR. 93 to 95 contributes to the substrate binding site; the sequence is SGW. Residue Asp-155 participates in Mg(2+) binding. The Proton acceptor role is filled by Cys-193. Substrate-binding positions include 194 to 195, Arg-230, 315 to 319, and Thr-349; these read GH and NCSPS.

The protein belongs to the isocitrate lyase/PEP mutase superfamily. Isocitrate lyase family. As to quaternary structure, homotetramer. Requires Mg(2+) as cofactor.

The catalysed reaction is D-threo-isocitrate = glyoxylate + succinate. The protein operates within carbohydrate metabolism; glyoxylate cycle; (S)-malate from isocitrate: step 1/2. Inhibited by 3-phosphoglycerate, 6-phosphogluconate, phosphoenolpyruvate (PEP), fructose 1,6-bisphosphate, glycolate, oxalate, and itaconate. In terms of biological role, involved in the metabolic adaptation in response to environmental changes. Catalyzes the reversible formation of succinate and glyoxylate from isocitrate, a key step of the glyoxylate cycle, which operates as an anaplerotic route for replenishing the tricarboxylic acid cycle during growth on fatty acid substrates. The chain is Isocitrate lyase from Corynebacterium glutamicum (strain ATCC 13032 / DSM 20300 / JCM 1318 / BCRC 11384 / CCUG 27702 / LMG 3730 / NBRC 12168 / NCIMB 10025 / NRRL B-2784 / 534).